The following is a 377-amino-acid chain: Putative glutamate--cysteine ligase 2 (377 aa).

The protein belongs to the glutamate--cysteine ligase type 2 family. YbdK subfamily.

It carries out the reaction L-cysteine + L-glutamate + ATP = gamma-L-glutamyl-L-cysteine + ADP + phosphate + H(+). Its function is as follows. ATP-dependent carboxylate-amine ligase which exhibits weak glutamate--cysteine ligase activity. The polypeptide is Putative glutamate--cysteine ligase 2 (Pseudomonas aeruginosa (strain ATCC 15692 / DSM 22644 / CIP 104116 / JCM 14847 / LMG 12228 / 1C / PRS 101 / PAO1)).